The following is a 192-amino-acid chain: uncharacterized protein (192 aa).

The signal sequence occupies residues Met-1–Ser-18. The N-palmitoyl cysteine moiety is linked to residue Cys-19. Residue Cys-19 is the site of S-diacylglycerol cysteine attachment.

Its subcellular location is the cell membrane. This is an uncharacterized protein from Borreliella burgdorferi (strain ATCC 35210 / DSM 4680 / CIP 102532 / B31) (Borrelia burgdorferi).